A 311-amino-acid chain; its full sequence is MKVWWAVLAAAILAGCRAQTEQEVEVPEQARWKAGQPWELALGRFWDYLRWVQSLSDQVQEELLSSQVTQELTMLMEETMKEVKAYKSELEEQLSPMAQEHRARLSKELQVAGALEADMEDVCNRLAQYRGEAQAMLGQSTEELARAFSSHLRKLRKRLLRDAEDLQKRMAVYGAGAREGAERGVSAVRERLGSRLERGRLRVATVGTLAGRPLRERAQAWGERLRGHLEEVGSRARDRLNEVREQVEEVRVKVEEQAPQMRLQAEAFQARLKSWFEPLVEDMQRQWAGLVEKLQAAMPSKAPAAAPIENQ.

The first 18 residues, 1–18 (MKVWWAVLAAAILAGCRA), serve as a signal peptide directing secretion. Tandem repeats lie at residues 74 to 95 (MLMEETMKEVKAYKSELEEQLS), 96 to 116 (PMAQEHRARLSKELQVAGALE), 117 to 138 (ADMEDVCNRLAQYRGEAQAMLG), 139 to 160 (QSTEELARAFSSHLRKLRKRLL), 161 to 182 (RDAEDLQKRMAVYGAGAREGAE), 183 to 204 (RGVSAVRERLGSRLERGRLRVA), 205 to 226 (TVGTLAGRPLRERAQAWGERLR), and 227 to 248 (GHLEEVGSRARDRLNEVREQVE). The 8 X 22 AA approximate tandem repeats stretch occupies residues 74-248 (MLMEETMKEV…RLNEVREQVE (175 aa)). Residue methionine 136 is modified to Methionine sulfoxide. Serine 140 is modified (phosphoserine). Positions 151–161 (HLRKLRKRLLR) are LDL and other lipoprotein receptors binding. Position 155 to 158 (155 to 158 (LRKR)) interacts with heparin. A lipid-binding and lipoprotein association region spans residues 203–283 (VATVGTLAGR…SWFEPLVEDM (81 aa)). A glycan (O-linked (GalNAc...) threonine) is linked at threonine 205. A heparin-binding site is contributed by 222–229 (GERLRGHL). The segment at 259 to 311 (PQMRLQAEAFQARLKSWFEPLVEDMQRQWAGLVEKLQAAMPSKAPAAAPIENQ) is homooligomerization. The interval 271-283 (RLKSWFEPLVEDM) is specificity for association with VLDL.

The protein belongs to the apolipoprotein A1/A4/E family. In terms of assembly, homotetramer. May interact with ABCA1; functionally associated with ABCA1 in the biogenesis of HDLs. May interact with APP/A4 amyloid-beta peptide; the interaction is extremely stable in vitro but its physiological significance is unclear. May interact with MAPT. May interact with MAP2. In the cerebrospinal fluid, interacts with secreted SORL1. Interacts with PMEL; this allows the loading of PMEL luminal fragment on ILVs to induce fibril nucleation. Post-translationally, APOE exists as multiple glycosylated and sialylated glycoforms within cells and in plasma. The extent of glycosylation and sialylation are tissue and context specific. Glycated in plasma VLDL. In terms of processing, phosphorylated by FAM20C in the extracellular medium.

It localises to the secreted. The protein localises to the extracellular space. It is found in the extracellular matrix. The protein resides in the extracellular vesicle. Its subcellular location is the endosome. It localises to the multivesicular body. APOE is an apolipoprotein, a protein associating with lipid particles, that mainly functions in lipoprotein-mediated lipid transport between organs via the plasma and interstitial fluids. APOE is a core component of plasma lipoproteins and is involved in their production, conversion and clearance. Apolipoproteins are amphipathic molecules that interact both with lipids of the lipoprotein particle core and the aqueous environment of the plasma. As such, APOE associates with chylomicrons, chylomicron remnants, very low density lipoproteins (VLDL) and intermediate density lipoproteins (IDL) but shows a preferential binding to high-density lipoproteins (HDL). It also binds a wide range of cellular receptors including the LDL receptor/LDLR and the very low-density lipoprotein receptor/VLDLR that mediate the cellular uptake of the APOE-containing lipoprotein particles. Finally, APOE also has a heparin-binding activity and binds heparan-sulfate proteoglycans on the surface of cells, a property that supports the capture and the receptor-mediated uptake of APOE-containing lipoproteins by cells. This is Apolipoprotein E (APOE) from Oryctolagus cuniculus (Rabbit).